We begin with the raw amino-acid sequence, 212 residues long: MPGRERRDGGRSADKNDNNKGRNDRGRNDRNNRRGRGRDDDRNQYIERVVTINRVSKVVKGGRRFSFTALVIVGDGQGMVGVGYGKAKEVPAAIQKGAEEARKNFFRVPMIAGTITHPVQGEAAAGIVMLRPAAPGTGVIAGGATRPVLECAGIQDVLSKSLGSDNAINVVHATVDALKQLVRPEEVAARRGKSVEEVTPTRMLRARAGQGA.

The interval 1 to 42 (MPGRERRDGGRSADKNDNNKGRNDRGRNDRNNRRGRGRDDDR) is disordered. An S5 DRBM domain is found at 45 to 108 (YIERVVTINR…EEARKNFFRV (64 aa)).

It belongs to the universal ribosomal protein uS5 family. In terms of assembly, part of the 30S ribosomal subunit. Contacts proteins S4 and S8.

With S4 and S12 plays an important role in translational accuracy. In terms of biological role, located at the back of the 30S subunit body where it stabilizes the conformation of the head with respect to the body. This Corynebacterium kroppenstedtii (strain DSM 44385 / JCM 11950 / CIP 105744 / CCUG 35717) protein is Small ribosomal subunit protein uS5.